We begin with the raw amino-acid sequence, 126 residues long: Small ribosomal subunit protein uS11 (126 aa).

It belongs to the universal ribosomal protein uS11 family. Part of the 30S ribosomal subunit. Interacts with proteins S7 and S18. Binds to IF-3.

In terms of biological role, located on the platform of the 30S subunit, it bridges several disparate RNA helices of the 16S rRNA. Forms part of the Shine-Dalgarno cleft in the 70S ribosome. This is Small ribosomal subunit protein uS11 from Ehrlichia chaffeensis (strain ATCC CRL-10679 / Arkansas).